A 650-amino-acid chain; its full sequence is Acetyl-coenzyme A synthetase (650 aa).

Residues 191 to 194, Thr-311, and Asn-335 contribute to the CoA site; that span reads RGGR. ATP contacts are provided by residues 387 to 389, 411 to 416, Asp-500, and Arg-515; these read GEP and DTWWQT. Residue Ser-523 participates in CoA binding. Arg-526 contributes to the ATP binding site. Mg(2+)-binding residues include Val-537, His-539, and Val-542. Residue Arg-584 coordinates CoA. Lys-609 is modified (N6-acetyllysine).

Belongs to the ATP-dependent AMP-binding enzyme family. The cofactor is Mg(2+). Post-translationally, acetylated. Deacetylation by the SIR2-homolog deacetylase activates the enzyme.

It carries out the reaction acetate + ATP + CoA = acetyl-CoA + AMP + diphosphate. Functionally, catalyzes the conversion of acetate into acetyl-CoA (AcCoA), an essential intermediate at the junction of anabolic and catabolic pathways. AcsA undergoes a two-step reaction. In the first half reaction, AcsA combines acetate with ATP to form acetyl-adenylate (AcAMP) intermediate. In the second half reaction, it can then transfer the acetyl group from AcAMP to the sulfhydryl group of CoA, forming the product AcCoA. In Shewanella sediminis (strain HAW-EB3), this protein is Acetyl-coenzyme A synthetase.